A 281-amino-acid chain; its full sequence is Lectin alpha chain (281 aa).

3 N-linked (GlcNAc...) asparagine glycosylation sites follow: Asn35, Asn82, and Asn140.

Belongs to the leguminous lectin family. Tetramer of 2 alpha and 2 beta chains. Glycosylated. In terms of processing, the beta chain is produced by partial proteolytic processing of the alpha chain.

Functionally, D-galactose-binding lectin. This is Lectin alpha chain from Lablab purpureus (Hyacinth bean).